Reading from the N-terminus, the 243-residue chain is Triosephosphate isomerase (243 aa).

9 to 11 (NWK) is a binding site for substrate. His-98 acts as the Electrophile in catalysis. Glu-167 serves as the catalytic Proton acceptor. Substrate-binding positions include Gly-173, Ser-205, and 226–227 (GG).

It belongs to the triosephosphate isomerase family. In terms of assembly, homodimer.

The protein resides in the cytoplasm. It catalyses the reaction D-glyceraldehyde 3-phosphate = dihydroxyacetone phosphate. It participates in carbohydrate biosynthesis; gluconeogenesis. Its pathway is carbohydrate degradation; glycolysis; D-glyceraldehyde 3-phosphate from glycerone phosphate: step 1/1. Functionally, involved in the gluconeogenesis. Catalyzes stereospecifically the conversion of dihydroxyacetone phosphate (DHAP) to D-glyceraldehyde-3-phosphate (G3P). This chain is Triosephosphate isomerase, found in Mesomycoplasma hyorhinis (Mycoplasma hyorhinis).